Reading from the N-terminus, the 429-residue chain is MKKVLAIILGGGAGTRLYPLTKLRAKPAVPLAGKYRLIDIPLSNCINSEILKIYVLTQFNSASLNRHLTRTYNFTGFSDGFVEVLAAQQTAENPKWFQGTADAVRQYLWAFQEWDIDEYLILSGDHLYRMDYRDFIQRHRETGADITLSVVPIDEERASSFGLMKIDDHGRVVDFSEKPKGDELKQMQVDTTVLGLTPEQAKESPYIASMGIYVFKKEVLAQLLEENPDQTDFGKEIIPFSAKDYNLQAYLFKGYWEDIGTIKAFYEANLALNRQPSPRFSFYNEEYPIYTRSRYLPPTKALNCTITESMVSEGCILKDCRIHNSILGIRTRIEANCTIEDTMLMGADYYESPSLRESKAQEGKIPMGIGEGSTIRRAIVDKNARIGRNVTIVNKENIDESNQEESGFYIRNGIVVILKNATIADGTVI.

Alpha-D-glucose 1-phosphate contacts are provided by residues G162, 177–178 (EK), and S209.

It belongs to the bacterial/plant glucose-1-phosphate adenylyltransferase family. As to quaternary structure, homotetramer.

It carries out the reaction alpha-D-glucose 1-phosphate + ATP + H(+) = ADP-alpha-D-glucose + diphosphate. It functions in the pathway glycan biosynthesis; glycogen biosynthesis. Its function is as follows. Involved in the biosynthesis of ADP-glucose, a building block required for the elongation reactions to produce glycogen. Catalyzes the reaction between ATP and alpha-D-glucose 1-phosphate (G1P) to produce pyrophosphate and ADP-Glc. The chain is Glucose-1-phosphate adenylyltransferase from Rippkaea orientalis (strain PCC 8801 / RF-1) (Cyanothece sp. (strain PCC 8801)).